A 67-amino-acid polypeptide reads, in one-letter code: Sec-independent protein translocase protein TatA (67 aa).

Residues 1–21 (MFGIGIQELLVVLVLVLLVFG) form a helical membrane-spanning segment. The interval 46-67 (PDEIDITPGKKNGKTDKDDKQA) is disordered. A compositionally biased stretch (basic and acidic residues) spans 58-67 (GKTDKDDKQA).

It belongs to the TatA/E family. The Tat system comprises two distinct complexes: a TatABC complex, containing multiple copies of TatA, TatB and TatC subunits, and a separate TatA complex, containing only TatA subunits. Substrates initially bind to the TatABC complex, which probably triggers association of the separate TatA complex to form the active translocon.

Its subcellular location is the cell inner membrane. Part of the twin-arginine translocation (Tat) system that transports large folded proteins containing a characteristic twin-arginine motif in their signal peptide across membranes. TatA could form the protein-conducting channel of the Tat system. The chain is Sec-independent protein translocase protein TatA from Nitratidesulfovibrio vulgaris (strain DSM 19637 / Miyazaki F) (Desulfovibrio vulgaris).